The following is a 594-amino-acid chain: Alanine--tRNA ligase (594 aa).

Positions 456, 460, 558, and 562 each coordinate Zn(2+).

Belongs to the class-II aminoacyl-tRNA synthetase family. The cofactor is Zn(2+).

It is found in the cytoplasm. The catalysed reaction is tRNA(Ala) + L-alanine + ATP = L-alanyl-tRNA(Ala) + AMP + diphosphate. Catalyzes the attachment of alanine to tRNA(Ala) in a two-step reaction: alanine is first activated by ATP to form Ala-AMP and then transferred to the acceptor end of tRNA(Ala). Also edits incorrectly charged Ser-tRNA(Ala) and Gly-tRNA(Ala) via its editing domain. The sequence is that of Alanine--tRNA ligase (alaS) from Borreliella burgdorferi (strain ATCC 35210 / DSM 4680 / CIP 102532 / B31) (Borrelia burgdorferi).